The sequence spans 67 residues: Large ribosomal subunit protein eL38 (67 aa).

Belongs to the eukaryotic ribosomal protein eL38 family.

This chain is Large ribosomal subunit protein eL38 (rpl38e), found in Aeropyrum pernix (strain ATCC 700893 / DSM 11879 / JCM 9820 / NBRC 100138 / K1).